A 273-amino-acid polypeptide reads, in one-letter code: NADPH-dependent 7-cyano-7-deazaguanine reductase (273 aa).

81-83 (VES) contributes to the substrate binding site. Residue 83–84 (SK) coordinates NADPH. Cys179 acts as the Thioimide intermediate in catalysis. The active-site Proton donor is Asp186. 218 to 219 (AE) is a binding site for substrate. Residue 247–248 (RG) coordinates NADPH.

The protein belongs to the GTP cyclohydrolase I family. QueF type 2 subfamily. As to quaternary structure, homodimer.

It localises to the cytoplasm. The enzyme catalyses 7-aminomethyl-7-carbaguanine + 2 NADP(+) = 7-cyano-7-deazaguanine + 2 NADPH + 3 H(+). The protein operates within tRNA modification; tRNA-queuosine biosynthesis. Its function is as follows. Catalyzes the NADPH-dependent reduction of 7-cyano-7-deazaguanine (preQ0) to 7-aminomethyl-7-deazaguanine (preQ1). The protein is NADPH-dependent 7-cyano-7-deazaguanine reductase of Rickettsia bellii (strain OSU 85-389).